The primary structure comprises 286 residues: Elongation factor Ts (286 aa).

The segment at 82-85 (TDFV) is involved in Mg(2+) ion dislocation from EF-Tu.

This sequence belongs to the EF-Ts family.

It localises to the cytoplasm. In terms of biological role, associates with the EF-Tu.GDP complex and induces the exchange of GDP to GTP. It remains bound to the aminoacyl-tRNA.EF-Tu.GTP complex up to the GTP hydrolysis stage on the ribosome. The protein is Elongation factor Ts of Hahella chejuensis (strain KCTC 2396).